A 98-amino-acid chain; its full sequence is NADH-ubiquinone oxidoreductase chain 4L (98 aa).

A run of 3 helical transmembrane segments spans residues 1 to 21, 29 to 49, and 61 to 81; these read MSMVYFNIFMAFTVSFVGLLM, SLLCLEGMMLSLFVMMSMTIL, and IILLVFAACEAALGLSLLVMV.

Belongs to the complex I subunit 4L family. In terms of assembly, core subunit of respiratory chain NADH dehydrogenase (Complex I) which is composed of 45 different subunits.

Its subcellular location is the mitochondrion inner membrane. It carries out the reaction a ubiquinone + NADH + 5 H(+)(in) = a ubiquinol + NAD(+) + 4 H(+)(out). Its function is as follows. Core subunit of the mitochondrial membrane respiratory chain NADH dehydrogenase (Complex I) which catalyzes electron transfer from NADH through the respiratory chain, using ubiquinone as an electron acceptor. Part of the enzyme membrane arm which is embedded in the lipid bilayer and involved in proton translocation. This chain is NADH-ubiquinone oxidoreductase chain 4L (MT-ND4L), found in Phocarctos hookeri (Hooker's sea lion).